A 443-amino-acid polypeptide reads, in one-letter code: Citrate transporter CitP (443 aa).

Transmembrane regions (helical) follow at residues 27–47 (ISGIGLVRYAFMAVLLIIAIS), 59–79 (IFALVLMGHVFYYLGAHLPIF), 83–103 (LGGGSVFTILLTAILVATNVM), 114–134 (FINGMDFLGLYIVSLIASSLF), 151–171 (VAFISMALTAVVIGIVGVIIG), 177–197 (AILYIAMPIMAGGVGAGIVPL), 209–229 (SAGILSKLFPTVILGNLLAII), 268–288 (YVQLGVGLIIAVMFFMIGTML), 294–314 (GINAYAFIILSIVLTKAFGLL), 322–342 (VIMFGQVIVKNMTHALLAGVG), 350–370 (VLLAALSWQFVVLCLVSIVAI), 388–410 (AAITAGLANNSMGGTGNVAVLAA), and 422–442 (MGNRIGGALILVVAGILVTFM).

This sequence belongs to the 2-hydroxycarboxylate transporter (2-HCT) (TC 2.A.24) family.

It localises to the cell membrane. It carries out the reaction (R)-lactate(in) + citrate(out) = (R)-lactate(out) + citrate(in). The enzyme catalyses (S)-lactate(in) + citrate(out) = (S)-lactate(out) + citrate(in). The catalysed reaction is citrate(in) + H(+)(in) = citrate(out) + H(+)(out). With respect to regulation, uptake of citrate is not affected by the absence or presence of Na(+) up to 25 mM and is increasingly inhibited by increasing Mg(2+) concentrations. Secondary transporter involved in citrate metabolism. During cometabolism of citrate and glucose, catalyzes the uptake of divalent citrate into the cell coupled to the exit of monovalent lactate, a product of citrate fermentation during citrate-glucose cometabolism (precursor/product exchange). The citrate/lactate exchange is electrogenic and results in the generation of a membrane potential. In the absence of glucose, i.e. when no lactate is produced, CitP catalyzes the proton-dependent transport of citrate and malate. Transports the divalent form of citrate and malate with the concomitant uptake of one proton, therefore translocating a single unit of negative charge across the membrane. In vitro, transports a range of substrates that contain the 2-hydroxycarboxylate motif, HO-CR(2)-COO(-), with a preference for malate, citrate and monovalent 2-hydroxyisobutyrate. Modification of the OH or the COO(-) groups of the 2-hydroxycarboxylate motif drastically reduces the affinity of the transporter for the substrates, indicating their relevance in substrate recognition. Significant activity is also observed with some 2-oxocarboxylates and a 3-hydroxycarboxylate. The sequence is that of Citrate transporter CitP from Leuconostoc mesenteroides subsp. mesenteroides.